The primary structure comprises 477 residues: Aspartyl/glutamyl-tRNA(Asn/Gln) amidotransferase subunit B (477 aa).

The protein belongs to the GatB/GatE family. GatB subfamily. In terms of assembly, heterotrimer of A, B and C subunits.

It catalyses the reaction L-glutamyl-tRNA(Gln) + L-glutamine + ATP + H2O = L-glutaminyl-tRNA(Gln) + L-glutamate + ADP + phosphate + H(+). It carries out the reaction L-aspartyl-tRNA(Asn) + L-glutamine + ATP + H2O = L-asparaginyl-tRNA(Asn) + L-glutamate + ADP + phosphate + 2 H(+). Its function is as follows. Allows the formation of correctly charged Asn-tRNA(Asn) or Gln-tRNA(Gln) through the transamidation of misacylated Asp-tRNA(Asn) or Glu-tRNA(Gln) in organisms which lack either or both of asparaginyl-tRNA or glutaminyl-tRNA synthetases. The reaction takes place in the presence of glutamine and ATP through an activated phospho-Asp-tRNA(Asn) or phospho-Glu-tRNA(Gln). In Ureaplasma parvum serovar 3 (strain ATCC 27815 / 27 / NCTC 11736), this protein is Aspartyl/glutamyl-tRNA(Asn/Gln) amidotransferase subunit B.